The primary structure comprises 494 residues: mRNA decay activator protein ZFP36L2 (494 aa).

Ser-57 is modified (phosphoserine). Residues 93 to 113 (GGPTSYGTLKEPSGGGGTALL) form a disordered region. At Ser-125 the chain carries Phosphoserine. Positions 153–158 (RYKTEL) match the RNA-binding motif. 2 C3H1-type zinc fingers span residues 153-181 (RYKT…HGFH) and 191-219 (KYKT…HNAD). The segment at 170-211 (YGEKCQFAHGFHELRSLTRHPKYKTELCRTFHTIGFCPYGPR) is RNA-binding. Thr-238 carries the phosphothreonine modification. 2 disordered regions span residues 257–293 (SLSF…PPSC) and 397–494 (QQQQ…ISDD). Pro residues predominate over residues 406-415 (PAQPPAPPSA). 2 stretches are compositionally biased toward low complexity: residues 416–435 (TLPA…QLPR) and 459–478 (YLSG…PSLD). Phosphoserine; by RPS6KA1 occurs at positions 490 and 492.

As to quaternary structure, associates with the cytoplasmic CCR4-NOT deadenylase to trigger ARE-containing mRNA deadenylation and decay processes. Interacts with CNOT7; this interaction is inhibited in response to phorbol 12-myristate 13-acetate (PMA) treatment in a p38 MAPK-dependent manner. Interacts with CNOT6L. In terms of processing, phosphorylated by RPS6KA1 at Ser-490 and Ser-492 upon phorbol 12-myristate 13-acetate (PMA) treatment; this phosphorylation results in dissociation of the CCR4-NOT-deadenylase complex and induces p38 MAPK-mediated stabilization of the low-density lipoprotein (LDL) receptor (LDLR) mRNA. Phosphorylation occurs during early preadipocyte differentiation. Expressed mainly in the basal epidermal layer, weakly in the suprabasal epidermal layers. Expressed in epidermal keratinocytes (at protein level). Expressed in oocytes.

Its subcellular location is the nucleus. It localises to the cytoplasm. Zinc-finger RNA-binding protein that destabilizes several cytoplasmic AU-rich element (ARE)-containing mRNA transcripts by promoting their poly(A) tail removal or deadenylation, and hence provide a mechanism for attenuating protein synthesis. Acts as a 3'-untranslated region (UTR) ARE mRNA-binding adapter protein to communicate signaling events to the mRNA decay machinery. Functions by recruiting the CCR4-NOT deadenylase complex and probably other components of the cytoplasmic RNA decay machinery to the bound ARE-containing mRNAs, and hence promotes ARE-mediated mRNA deadenylation and decay processes. Binds to 3'-UTR ARE of numerous mRNAs. Promotes ARE-containing mRNA decay of the low-density lipoprotein (LDL) receptor (LDLR) mRNA in response to phorbol 12-myristate 13-acetate (PMA) treatment in a p38 MAPK-dependent manner. Positively regulates early adipogenesis by promoting ARE-mediated mRNA decay of immediate early genes (IEGs). Plays a role in mature peripheral neuron integrity by promoting ARE-containing mRNA decay of the transcriptional repressor REST mRNA. Plays a role in ovulation and oocyte meiotic maturation by promoting ARE-mediated mRNA decay of the luteinizing hormone receptor LHCGR mRNA. Acts as a negative regulator of erythroid cell differentiation: promotes glucocorticoid-induced self-renewal of erythroid cells by binding mRNAs that are induced or highly expressed during terminal erythroid differentiation and promotes their degradation, preventing erythroid cell differentiation. In association with ZFP36L1 maintains quiescence on developing B lymphocytes by promoting ARE-mediated decay of several mRNAs encoding cell cycle regulators that help B cells progress through the cell cycle, and hence ensuring accurate variable-diversity-joining (VDJ) recombination process and functional immune cell formation. Together with ZFP36L1 is also necessary for thymocyte development and prevention of T-cell acute lymphoblastic leukemia (T-ALL) transformation by promoting ARE-mediated mRNA decay of the oncogenic transcription factor NOTCH1 mRNA. The polypeptide is mRNA decay activator protein ZFP36L2 (Homo sapiens (Human)).